Here is a 376-residue protein sequence, read N- to C-terminus: Succinyl-diaminopimelate desuccinylase (376 aa).

His67 contacts Zn(2+). Asp69 is an active-site residue. Asp100 contributes to the Zn(2+) binding site. Glu134 (proton acceptor) is an active-site residue. The Zn(2+) site is built by Glu135, Glu163, and His349.

Belongs to the peptidase M20A family. DapE subfamily. In terms of assembly, homodimer. Zn(2+) is required as a cofactor. Co(2+) serves as cofactor.

It carries out the reaction N-succinyl-(2S,6S)-2,6-diaminopimelate + H2O = (2S,6S)-2,6-diaminopimelate + succinate. It participates in amino-acid biosynthesis; L-lysine biosynthesis via DAP pathway; LL-2,6-diaminopimelate from (S)-tetrahydrodipicolinate (succinylase route): step 3/3. In terms of biological role, catalyzes the hydrolysis of N-succinyl-L,L-diaminopimelic acid (SDAP), forming succinate and LL-2,6-diaminopimelate (DAP), an intermediate involved in the bacterial biosynthesis of lysine and meso-diaminopimelic acid, an essential component of bacterial cell walls. In Haemophilus ducreyi (strain 35000HP / ATCC 700724), this protein is Succinyl-diaminopimelate desuccinylase.